The following is a 52-amino-acid chain: Conotoxin Cal9.2c (52 aa).

A propeptide spanning residues 1 to 6 is cleaved from the precursor; sequence KKGVTL. 3 disulfides stabilise this stretch: C14–C31, C19–C41, and C21–C46.

As to expression, expressed by the venom duct.

The protein localises to the secreted. In terms of biological role, probable neurotoxin with unknown target. Possibly targets ion channels. This is Conotoxin Cal9.2c from Californiconus californicus (California cone).